The following is a 904-amino-acid chain: Toll-like receptor 3 (904 aa).

The first 23 residues, 1–23, serve as a signal peptide directing secretion; it reads MRQTLPCIYFWGGLLPFGMLCAS. An LRRNT domain is found at 24–51; that stretch reads STTKCTVSHEVADCSHLKLTQVPDDLPT. Residues 24–704 lie on the Lumenal side of the membrane; that stretch reads STTKCTVSHE…SCKDSAPFEL (681 aa). Cysteines 28 and 37 form a disulfide. N-linked (GlcNAc...) asparagine glycosylation is found at Asn-52, Asn-57, and Asn-70. LRR repeat units lie at residues 52 to 73, 76 to 97, 100 to 121, 124 to 145, 148 to 168, and 172 to 193; these read NITV…NFTR, QLTS…LCQK, MLKV…TFAF, NLTE…PFVK, NLIT…GTQV, and NLQE…ELDI. The cysteines at positions 95 and 122 are disulfide-linked. Asn-124 carries an N-linked (GlcNAc...) asparagine glycan. Asn-196 is a glycosylation site (N-linked (GlcNAc...) asparagine). LRR repeat units lie at residues 198 to 219 and 222 to 244; these read SLKK…CFHA and RLFG…LCLE. N-linked (GlcNAc...) asparagine glycans are attached at residues Asn-247, Asn-252, Asn-265, Asn-275, and Asn-291. LRR repeat units follow at residues 249 to 270, 275 to 296, 299 to 320, 323 to 344, 356 to 377, 380 to 400, 408 to 429, 432 to 454, 465 to 486, 507 to 528, 531 to 552, 563 to 584, 587 to 608, and 611 to 632; these read SIRN…TFLG, NLTM…SFAW, QLEY…SLHG, NVRY…ASLP, CLEH…MFTG, NLKY…TNET, PLHI…AFSW, HLEV…EWRG, YNKY…QRLM, NLTI…MLEG, KLEI…ANPG, HLHI…VFKD, ELKI…VFNN, and SLKS…VFGP. 2 N-linked (GlcNAc...) asparagine glycosylation sites follow: Asn-398 and Asn-413. N-linked (GlcNAc...) asparagine glycosylation occurs at Asn-507. Asn-636 and Asn-662 each carry an N-linked (GlcNAc...) asparagine glycan. In terms of domain architecture, LRRCT spans 645–698; sequence NPFDCTCESIAWFVNWINETHTNIPELSSHYLCNTPPHYHGFPVRLFDTSSCKD. 2 cysteine pairs are disulfide-bonded: Cys-649-Cys-677 and Cys-651-Cys-696. A helical transmembrane segment spans residues 705–725; that stretch reads FFMINTSILLIFIFIVLLIHF. Residues 726–904 are Cytoplasmic-facing; the sequence is EGWRISFYWN…VALGSKNSVH (179 aa). The TIR domain occupies 754-897; that stretch reads FEYAAYIIHA…AFRHKLQVAL (144 aa). A Phosphotyrosine modification is found at Tyr-759. Residues Lys-765, Lys-812, and Lys-831 each participate in a glycyl lysine isopeptide (Lys-Gly) (interchain with G-Cter in ubiquitin) cross-link. Position 858 is a phosphotyrosine (Tyr-858).

It belongs to the Toll-like receptor family. Monomer and homodimer; dimerization is triggered by ligand-binding, the signaling unit is composed of one ds-RNA of around 40 bp and two TLR3 molecules, and lateral clustering of signaling units along the length of the ds-RNA ligand is required for TLR3 signal transduction. Interacts (via transmembrane domain) with UNC93B1; the interaction is required for transport from the ER to the endosomes. Interacts with SRC; upon binding of double-stranded RNA. Interacts with TICAM1 (via the TIR domain) in response to poly(I:C) and this interaction is enhanced in the presence of WDFY1. The tyrosine-phosphorylated form (via TIR domain) interacts with WDFY1 (via WD repeat 2) in response to poly(I:C). In terms of processing, heavily N-glycosylated, except on that part of the surface of the ectodomain that is involved in ligand binding. Post-translationally, TLR3 signaling requires a proteolytic cleavage mediated by cathepsins CTSB and CTSH, the cleavage occurs between amino acids 252 and 346. The cleaved form of TLR3 is the predominant form found in endosomes. Ubiquitinated by TRIM3; leading to recognition and sorting of polyubiquitinated TLR3 by the ESCRT complexes. Ubiquitinated by ZNRF1 via 'Lys-63'-linked ubiquitin chains; leading to TLR3 lysosomal trafficking and degradation. Ubiquitinated by RNF170 at Lys-765 via 'Lys-48'-linked ubiquitin chains; leading to TLR3 proteasomal degradation. Expressed at high level in placenta and pancreas. Also detected in CD11c+ immature dendritic cells. Only expressed in dendritic cells and not in other leukocytes, including monocyte precursors. TLR3 is the TLR that is expressed most strongly in the brain, especially in astrocytes, glia, and neurons.

It is found in the endoplasmic reticulum membrane. The protein resides in the endosome membrane. Its subcellular location is the early endosome. Its function is as follows. Key component of innate and adaptive immunity. TLRs (Toll-like receptors) control host immune response against pathogens through recognition of molecular patterns specific to microorganisms. TLR3 is a nucleotide-sensing TLR which is activated by double-stranded RNA, a sign of viral infection. Acts via the adapter TRIF/TICAM1, leading to NF-kappa-B activation, IRF3 nuclear translocation, cytokine secretion and the inflammatory response. The polypeptide is Toll-like receptor 3 (Homo sapiens (Human)).